A 500-amino-acid polypeptide reads, in one-letter code: Probable zinc metalloprotease MGYG_02393 (500 aa).

The signal sequence occupies residues 1–24; sequence MHLSMGGLLPGLALLASANALALA. 3 N-linked (GlcNAc...) asparagine glycosylation sites follow: Asn61, Asn103, and Asn124. Zn(2+)-binding residues include His174, Asp194, and Glu230. The N-linked (GlcNAc...) asparagine glycan is linked to Asn245. Asp257 contacts Zn(2+). A Fibronectin type-III domain is found at 414–500; that stretch reads MPRNVRVNTS…ERGVAVLPFP (87 aa). 2 N-linked (GlcNAc...) asparagine glycosylation sites follow: Asn421 and Asn427.

This sequence belongs to the peptidase M28 family. M28B subfamily. It depends on Zn(2+) as a cofactor.

Its subcellular location is the secreted. The polypeptide is Probable zinc metalloprotease MGYG_02393 (Arthroderma gypseum (strain ATCC MYA-4604 / CBS 118893) (Microsporum gypseum)).